Reading from the N-terminus, the 97-residue chain is Aspartyl/glutamyl-tRNA(Asn/Gln) amidotransferase subunit C (97 aa).

It belongs to the GatC family. Heterotrimer of A, B and C subunits.

It catalyses the reaction L-glutamyl-tRNA(Gln) + L-glutamine + ATP + H2O = L-glutaminyl-tRNA(Gln) + L-glutamate + ADP + phosphate + H(+). The catalysed reaction is L-aspartyl-tRNA(Asn) + L-glutamine + ATP + H2O = L-asparaginyl-tRNA(Asn) + L-glutamate + ADP + phosphate + 2 H(+). Its function is as follows. Allows the formation of correctly charged Asn-tRNA(Asn) or Gln-tRNA(Gln) through the transamidation of misacylated Asp-tRNA(Asn) or Glu-tRNA(Gln) in organisms which lack either or both of asparaginyl-tRNA or glutaminyl-tRNA synthetases. The reaction takes place in the presence of glutamine and ATP through an activated phospho-Asp-tRNA(Asn) or phospho-Glu-tRNA(Gln). The polypeptide is Aspartyl/glutamyl-tRNA(Asn/Gln) amidotransferase subunit C (Clostridium botulinum (strain Eklund 17B / Type B)).